Consider the following 210-residue polypeptide: MAFILSFWMIFLLDSVIVLLSFVCFVCVWICALLFSTVLLVSKLNNIYCTWDFTASKFIDVYWFTIGGMFSLGLLLRLCLLLYFGHLNFVSFDLCKVVGFQWYWVYFIFGETTIFSNLILESDYMIGDLRLLQCNHVLTLLSLVIYKLWLSAVDVIHSFAISSLGVKVDCIPGRCNEIVLFSSNNATVYGQCSELCGVLHGFMPIVICFI.

Residues methionine 1–leucine 20 lie on the Mitochondrial intermembrane side of the membrane. Residues serine 21–serine 42 traverse the membrane as a helical segment. The Mitochondrial matrix portion of the chain corresponds to lysine 43 to aspartate 60. A helical membrane pass occupies residues valine 61–histidine 86. Over leucine 87–isoleucine 210 the chain is Mitochondrial intermembrane. The Cu cation site is built by histidine 157, cysteine 192, glutamate 194, cysteine 196, histidine 200, and methionine 203. Glutamate 194 contributes to the Mg(2+) binding site.

Belongs to the cytochrome c oxidase subunit 2 family. In terms of assembly, component of the cytochrome c oxidase (complex IV, CIV), a multisubunit enzyme composed of a catalytic core of 3 subunits and several supernumerary subunits. The complex exists as a monomer or a dimer and forms supercomplexes (SCs) in the inner mitochondrial membrane with ubiquinol-cytochrome c oxidoreductase (cytochrome b-c1 complex, complex III, CIII). Cu cation serves as cofactor.

The protein localises to the mitochondrion inner membrane. The enzyme catalyses 4 Fe(II)-[cytochrome c] + O2 + 8 H(+)(in) = 4 Fe(III)-[cytochrome c] + 2 H2O + 4 H(+)(out). Component of the cytochrome c oxidase, the last enzyme in the mitochondrial electron transport chain which drives oxidative phosphorylation. The respiratory chain contains 3 multisubunit complexes succinate dehydrogenase (complex II, CII), ubiquinol-cytochrome c oxidoreductase (cytochrome b-c1 complex, complex III, CIII) and cytochrome c oxidase (complex IV, CIV), that cooperate to transfer electrons derived from NADH and succinate to molecular oxygen, creating an electrochemical gradient over the inner membrane that drives transmembrane transport and the ATP synthase. Cytochrome c oxidase is the component of the respiratory chain that catalyzes the reduction of oxygen to water. Electrons originating from reduced cytochrome c in the intermembrane space (IMS) are transferred via the dinuclear copper A center (CU(A)) of subunit 2 and heme A of subunit 1 to the active site in subunit 1, a binuclear center (BNC) formed by heme A3 and copper B (CU(B)). The BNC reduces molecular oxygen to 2 water molecules using 4 electrons from cytochrome c in the IMS and 4 protons from the mitochondrial matrix. The protein is Cytochrome c oxidase subunit 2 of Leishmania tarentolae (Sauroleishmania tarentolae).